We begin with the raw amino-acid sequence, 57 residues long: Large ribosomal subunit protein bL32c (57 aa).

Belongs to the bacterial ribosomal protein bL32 family.

The protein localises to the plastid. It is found in the chloroplast. This chain is Large ribosomal subunit protein bL32c, found in Amborella trichopoda.